The chain runs to 461 residues: Asparagine--tRNA ligase (461 aa).

This sequence belongs to the class-II aminoacyl-tRNA synthetase family. As to quaternary structure, homodimer.

The protein resides in the cytoplasm. The enzyme catalyses tRNA(Asn) + L-asparagine + ATP = L-asparaginyl-tRNA(Asn) + AMP + diphosphate + H(+). In Oleidesulfovibrio alaskensis (strain ATCC BAA-1058 / DSM 17464 / G20) (Desulfovibrio alaskensis), this protein is Asparagine--tRNA ligase.